Here is a 212-residue protein sequence, read N- to C-terminus: Uracil phosphoribosyltransferase (212 aa).

Residues R78, R103, and 130–138 (DPMLATGGS) contribute to the 5-phospho-alpha-D-ribose 1-diphosphate site. Residues I193 and 198–200 (GDA) contribute to the uracil site. Position 199 (D199) interacts with 5-phospho-alpha-D-ribose 1-diphosphate.

Belongs to the UPRTase family. The cofactor is Mg(2+).

It catalyses the reaction UMP + diphosphate = 5-phospho-alpha-D-ribose 1-diphosphate + uracil. Its pathway is pyrimidine metabolism; UMP biosynthesis via salvage pathway; UMP from uracil: step 1/1. Allosterically activated by GTP. Functionally, catalyzes the conversion of uracil and 5-phospho-alpha-D-ribose 1-diphosphate (PRPP) to UMP and diphosphate. The polypeptide is Uracil phosphoribosyltransferase (Bordetella avium (strain 197N)).